A 146-amino-acid polypeptide reads, in one-letter code: 3-dehydroquinate dehydratase (146 aa).

The active-site Proton acceptor is the Tyr22. Substrate contacts are provided by Asn73, His79, and Asp86. The active-site Proton donor is the His99. Residues Leu100–Ser101 and Arg110 each bind substrate.

It belongs to the type-II 3-dehydroquinase family. Homododecamer.

It carries out the reaction 3-dehydroquinate = 3-dehydroshikimate + H2O. Its pathway is metabolic intermediate biosynthesis; chorismate biosynthesis; chorismate from D-erythrose 4-phosphate and phosphoenolpyruvate: step 3/7. In terms of biological role, catalyzes a trans-dehydration via an enolate intermediate. This is 3-dehydroquinate dehydratase from Synechococcus sp. (strain CC9902).